The sequence spans 291 residues: Kidney mitochondrial carrier protein 1 (291 aa).

Serine 2 carries the post-translational modification N-acetylserine. Solcar repeat units follow at residues 7-96 (KPFV…LKRL), 104-189 (ETLP…TKKH), and 198-289 (DTVY…LKKL). 6 consecutive transmembrane segments (helical) span residues 9–26 (FVYGGLASITAECGTFPI), 71–89 (GIAPAMLRQASYGTIKIGT), 105–124 (TLPINVICGILSGVISSTIA), 164–183 (GVSLTAQRAAIVVGVELPVY), 204–224 (FLSSFTCGLAGALASNPVDVV), and 264–283 (GFWPNWLRLGPWNIIFFVTY).

This sequence belongs to the mitochondrial carrier (TC 2.A.29) family. As to quaternary structure, interacts with VDAC1.

It localises to the mitochondrion inner membrane. The catalysed reaction is sulfite(in) + sulfate(out) = sulfite(out) + sulfate(in). It catalyses the reaction thiosulfate(in) + sulfate(out) = thiosulfate(out) + sulfate(in). The enzyme catalyses sulfate(out) + phosphate(in) = sulfate(in) + phosphate(out). It carries out the reaction oxalate(in) + sulfate(out) = oxalate(out) + sulfate(in). The catalysed reaction is malonate(in) + sulfate(out) = malonate(out) + sulfate(in). It catalyses the reaction maleate(in) + sulfate(out) = maleate(out) + sulfate(in). The enzyme catalyses (S)-malate(in) + sulfate(out) = (S)-malate(out) + sulfate(in). It carries out the reaction (3S)-citramalate(in) + sulfate(out) = (3S)-citramalate(out) + sulfate(in). The catalysed reaction is (3R)-citramalate(in) + sulfate(out) = (3R)-citramalate(out) + sulfate(in). It catalyses the reaction sulfate(out) + succinate(in) = sulfate(in) + succinate(out). The enzyme catalyses (S,S)-tartrate(in) + sulfate(out) = (S,S)-tartrate(out) + sulfate(in). It carries out the reaction (2R,3R)-tartrate(in) + sulfate(out) = (2R,3R)-tartrate(out) + sulfate(in). The catalysed reaction is D-aspartate(in) + sulfate(out) = D-aspartate(out) + sulfate(in). It catalyses the reaction L-aspartate(in) + sulfate(out) = L-aspartate(out) + sulfate(in). The enzyme catalyses sulfate(in) = sulfate(out). It carries out the reaction phosphate(in) = phosphate(out). The catalysed reaction is (S)-malate(out) = (S)-malate(in). Increased activity at pH 6.0. sulfate/sulfate exchange activity is inhibited strongly by pyridoxal 5'-phosphate, bathophenanthroline and the organic mercurials mersalyl, p-chloromercuribenzoate and HgCl2. Antiporter that transports inorganic anions (sulfate, sulfite, thiosulfate and phosphate) and, to a lesser extent, a variety of dicarboxylates (e.g. malonate, malate and citramalate) and, even more so, aspartate. The sulfate/sulfate exchange is much higher than the phosphate/phosphate and malate/malate exchanges. The transport affinities is higher for sulfate and thiosulfate than for any other substrate. May catalyze the export of sulfite and thiosulfate (the hydrogen sulfide degradation products) from the mitochondria, thereby modulating the level of the hydrogen sulfide. Also may mediate a very low unidirectional transport of sulfate, phosphate and (S)-malate. This chain is Kidney mitochondrial carrier protein 1, found in Homo sapiens (Human).